The following is a 599-amino-acid chain: Histone-arginine methyltransferase CARMER (599 aa).

The SAM-dependent MTase PRMT-type domain occupies 127-434 (ASQYFQFYGY…QRQSYDVEID (308 aa)). S-adenosyl-L-methionine contacts are provided by Gln-140, Arg-149, Gly-173, Glu-195, Glu-224, and Thr-252. Arg-487 bears the Asymmetric dimethylarginine; by autocatalysis mark.

This sequence belongs to the class I-like SAM-binding methyltransferase superfamily. Protein arginine N-methyltransferase family. In terms of assembly, homodimer. The dimethylated protein is the major form.

It is found in the cytoplasm. It localises to the nucleus. It carries out the reaction L-arginyl-[protein] + 2 S-adenosyl-L-methionine = N(omega),N(omega)-dimethyl-L-arginyl-[protein] + 2 S-adenosyl-L-homocysteine + 2 H(+). Its function is as follows. Methylates (mono- and asymmetric dimethylation) the guanidino nitrogens of arginyl residues in proteins. May methylate histone H3 at 'Arg-17' and activate transcription via chromatin remodeling. In Culex quinquefasciatus (Southern house mosquito), this protein is Histone-arginine methyltransferase CARMER (Art4).